Consider the following 95-residue polypeptide: Large ribosomal subunit protein bL25 (95 aa).

The protein belongs to the bacterial ribosomal protein bL25 family. As to quaternary structure, part of the 50S ribosomal subunit; part of the 5S rRNA/L5/L18/L25 subcomplex. Contacts the 5S rRNA. Binds to the 5S rRNA independently of L5 and L18.

Functionally, this is one of the proteins that binds to the 5S RNA in the ribosome where it forms part of the central protuberance. This chain is Large ribosomal subunit protein bL25, found in Mannheimia succiniciproducens (strain KCTC 0769BP / MBEL55E).